We begin with the raw amino-acid sequence, 123 residues long: Ribosome-binding factor A (123 aa).

It belongs to the RbfA family. In terms of assembly, monomer. Binds 30S ribosomal subunits, but not 50S ribosomal subunits or 70S ribosomes.

The protein resides in the cytoplasm. One of several proteins that assist in the late maturation steps of the functional core of the 30S ribosomal subunit. Associates with free 30S ribosomal subunits (but not with 30S subunits that are part of 70S ribosomes or polysomes). Required for efficient processing of 16S rRNA. May interact with the 5'-terminal helix region of 16S rRNA. The protein is Ribosome-binding factor A of Neisseria gonorrhoeae (strain ATCC 700825 / FA 1090).